We begin with the raw amino-acid sequence, 257 residues long: 3-dehydroquinate dehydratase (257 aa).

3-dehydroquinate-binding positions include glutamate 50–arginine 52 and arginine 86. Histidine 147 (proton donor/acceptor) is an active-site residue. Catalysis depends on lysine 174, which acts as the Schiff-base intermediate with substrate. Positions 216, 235, and 239 each coordinate 3-dehydroquinate.

Belongs to the type-I 3-dehydroquinase family. As to quaternary structure, homodimer.

The catalysed reaction is 3-dehydroquinate = 3-dehydroshikimate + H2O. It functions in the pathway metabolic intermediate biosynthesis; chorismate biosynthesis; chorismate from D-erythrose 4-phosphate and phosphoenolpyruvate: step 3/7. Involved in the third step of the chorismate pathway, which leads to the biosynthesis of aromatic amino acids. Catalyzes the cis-dehydration of 3-dehydroquinate (DHQ) and introduces the first double bond of the aromatic ring to yield 3-dehydroshikimate. The chain is 3-dehydroquinate dehydratase from Geobacillus kaustophilus (strain HTA426).